The following is a 396-amino-acid chain: Beta-1,3-N-acetylglucosaminyltransferase radical fringe (396 aa).

Residues 1–6 (MNFSCL) lie on the Cytoplasmic side of the membrane. A helical; Signal-anchor for type II membrane protein transmembrane segment spans residues 7–27 (GLSKICFLVSVIFCTFLLLFI). Residues 28-396 (PKTKTPWRPR…THWCPPRKTR (369 aa)) are Lumenal-facing. Residues N49 and N120 are each glycosylated (N-linked (GlcNAc...) asparagine). R145 serves as a coordination point for substrate. N184 carries an N-linked (GlcNAc...) asparagine glycan. 2 disulfide bridges follow: C185/C196 and C214/C277. Position 218 (D218) interacts with substrate. Residue D219 coordinates Mn(2+). D307 is a catalytic residue. H331 contacts Mn(2+). The cysteines at positions 381 and 390 are disulfide-linked.

This sequence belongs to the glycosyltransferase 31 family. It depends on Mn(2+) as a cofactor. As to expression, detected in the mesanchymal region of the developing limb. Expressed in mesoderm but not in ectoderm with no evident boundary of expression.

It is found in the golgi apparatus membrane. It catalyses the reaction 3-O-(alpha-L-fucosyl)-L-threonyl-[EGF-like domain protein] + UDP-N-acetyl-alpha-D-glucosamine = 3-O-(N-acetyl-beta-D-glucosaminyl-(1-&gt;3)-alpha-L-fucosyl)-L-threonyl-[EGF-like domain protein] + UDP + H(+). The enzyme catalyses 3-O-(alpha-L-fucosyl)-L-seryl-[EGF-like domain protein] + UDP-N-acetyl-alpha-D-glucosamine = 3-O-(N-acetyl-beta-D-glucosaminyl-(1-&gt;3)-alpha-L-fucosyl)-L-seryl-[EGF-like domain protein] + UDP + H(+). In terms of biological role, glycosyltransferase that initiates the elongation of O-linked fucose residues attached to EGF-like repeats in the extracellular domain of Notch molecules. Involved in forelimb development and in adult forelimb regeneration. The chain is Beta-1,3-N-acetylglucosaminyltransferase radical fringe (RFNG) from Notophthalmus viridescens (Eastern newt).